Consider the following 20-residue polypeptide: Small ribosomal subunit protein bS20 (20 aa).

Positions 1-20 (ANNPGARKAIRKIEARTEVN) are disordered. The segment covering 11–20 (RKIEARTEVN) has biased composition (basic and acidic residues).

The protein belongs to the bacterial ribosomal protein bS20 family.

Its function is as follows. Binds directly to 16S ribosomal RNA. This chain is Small ribosomal subunit protein bS20 (rpsT), found in Brevundimonas vesicularis (Pseudomonas vesicularis).